Here is a 193-residue protein sequence, read N- to C-terminus: ATP-dependent Clp protease proteolytic subunit 2 (193 aa).

The Nucleophile role is filled by Ser-98. His-123 is a catalytic residue.

It belongs to the peptidase S14 family. Fourteen ClpP subunits assemble into 2 heptameric rings which stack back to back to give a disk-like structure with a central cavity, resembling the structure of eukaryotic proteasomes.

Its subcellular location is the cytoplasm. It catalyses the reaction Hydrolysis of proteins to small peptides in the presence of ATP and magnesium. alpha-casein is the usual test substrate. In the absence of ATP, only oligopeptides shorter than five residues are hydrolyzed (such as succinyl-Leu-Tyr-|-NHMec, and Leu-Tyr-Leu-|-Tyr-Trp, in which cleavage of the -Tyr-|-Leu- and -Tyr-|-Trp bonds also occurs).. Its function is as follows. Cleaves peptides in various proteins in a process that requires ATP hydrolysis. Has a chymotrypsin-like activity. Plays a major role in the degradation of misfolded proteins. The protein is ATP-dependent Clp protease proteolytic subunit 2 of Bacillus anthracis.